We begin with the raw amino-acid sequence, 68 residues long: Frenatin-3 (68 aa).

The first 22 residues, 1–22 (MHFLKKSIFLVLFLGLVSLSIC), serve as a signal peptide directing secretion. Positions 23–46 (EKEKREDQNEEEVDENEEESEEKR) are excised as a propeptide. Residues 26–47 (KREDQNEEEVDENEEESEEKRG) are disordered. Over residues 30–42 (QNEEEVDENEEES) the composition is skewed to acidic residues.

This sequence belongs to the frog skin active peptide (FSAP) family. Frenatin subfamily. In terms of tissue distribution, expressed by the granular skin glands.

The protein resides in the secreted. In terms of biological role, antimicrobial peptide with activity against both Gram-positive and Gram-negative bacteria. Antibacterial activities have been tested against Bacillus cereus (MIC=12.5 ug/ml), Escherichia coli (MIC=50 ug/ml), Leuconostoc mesenteroides (MIC=25 ug/ml), Micrococcus luteus (MIC=1.5 ug/ml), Pastewella haemolytica (MIC=0.8 ug/ml), Staphylococcus aureus (MIC&lt;l00 ug/ml), Streptococcus faecalis (MIC&lt;150 ug/ml) and Streptococcus uberis (MIC=50 ug/ml). Strongly inhibits the formation of NO by neuronal nitric oxide synthase (nNOS) at micromolar concentrations. Acts by a non-competitive mechanism, probably by binding to calcium/calmodulin and as a consequence blocking calmodulin attachment to nNOS. This chain is Frenatin-3, found in Nyctimystes infrafrenatus (White-lipped tree frog).